We begin with the raw amino-acid sequence, 225 residues long: Enolase-phosphatase E1 (225 aa).

Belongs to the HAD-like hydrolase superfamily. MasA/MtnC family. In terms of assembly, monomer. Requires Mg(2+) as cofactor.

The catalysed reaction is 5-methylsulfanyl-2,3-dioxopentyl phosphate + H2O = 1,2-dihydroxy-5-(methylsulfanyl)pent-1-en-3-one + phosphate. Its pathway is amino-acid biosynthesis; L-methionine biosynthesis via salvage pathway; L-methionine from S-methyl-5-thio-alpha-D-ribose 1-phosphate: step 3/6. The protein operates within amino-acid biosynthesis; L-methionine biosynthesis via salvage pathway; L-methionine from S-methyl-5-thio-alpha-D-ribose 1-phosphate: step 4/6. In terms of biological role, bifunctional enzyme that catalyzes the enolization of 2,3-diketo-5-methylthiopentyl-1-phosphate (DK-MTP-1-P) into the intermediate 2-hydroxy-3-keto-5-methylthiopentenyl-1-phosphate (HK-MTPenyl-1-P), which is then dephosphorylated to form the acireductone 1,2-dihydroxy-3-keto-5-methylthiopentene (DHK-MTPene). The sequence is that of Enolase-phosphatase E1 from Shewanella loihica (strain ATCC BAA-1088 / PV-4).